The primary structure comprises 360 residues: Heat-inducible transcription repressor HrcA (360 aa).

It belongs to the HrcA family.

Its function is as follows. Negative regulator of class I heat shock genes (grpE-dnaK-dnaJ and groELS operons). Prevents heat-shock induction of these operons. The chain is Heat-inducible transcription repressor HrcA from Gloeobacter violaceus (strain ATCC 29082 / PCC 7421).